We begin with the raw amino-acid sequence, 261 residues long: Small ribosomal subunit protein eS4B (261 aa).

A Phosphoserine modification is found at Ser32. In terms of domain architecture, S4 RNA-binding spans 42–105; it reads LPLIVFLRNR…NENFRLVYDV (64 aa). Residue Lys62 forms a Glycyl lysine isopeptide (Lys-Gly) (interchain with G-Cter in ubiquitin) linkage. Thr115 carries the phosphothreonine modification. Glycyl lysine isopeptide (Lys-Gly) (interchain with G-Cter in ubiquitin) cross-links involve residues Lys134, Lys161, Lys168, Lys174, Lys179, Lys211, and Lys233. Ser247 carries the post-translational modification Phosphoserine.

Belongs to the eukaryotic ribosomal protein eS4 family. As to quaternary structure, component of the small ribosomal subunit (SSU). Mature yeast ribosomes consist of a small (40S) and a large (60S) subunit. The 40S small subunit contains 1 molecule of ribosomal RNA (18S rRNA) and 33 different proteins (encoded by 57 genes). The large 60S subunit contains 3 rRNA molecules (25S, 5.8S and 5S rRNA) and 46 different proteins (encoded by 81 genes).

Its subcellular location is the cytoplasm. In terms of biological role, component of the ribosome, a large ribonucleoprotein complex responsible for the synthesis of proteins in the cell. The small ribosomal subunit (SSU) binds messenger RNAs (mRNAs) and translates the encoded message by selecting cognate aminoacyl-transfer RNA (tRNA) molecules. The large subunit (LSU) contains the ribosomal catalytic site termed the peptidyl transferase center (PTC), which catalyzes the formation of peptide bonds, thereby polymerizing the amino acids delivered by tRNAs into a polypeptide chain. The nascent polypeptides leave the ribosome through a tunnel in the LSU and interact with protein factors that function in enzymatic processing, targeting, and the membrane insertion of nascent chains at the exit of the ribosomal tunnel. This Saccharomyces cerevisiae (strain ATCC 204508 / S288c) (Baker's yeast) protein is Small ribosomal subunit protein eS4B.